A 1376-amino-acid chain; its full sequence is DNA-directed RNA polymerase subunit beta'' (1376 aa).

Zn(2+) contacts are provided by C221, C290, C297, and C300. A disordered region spans residues 895–919 (PSGSGFPSDNELDHSNRNPFSSSYP).

Belongs to the RNA polymerase beta' chain family. RpoC2 subfamily. In plastids the minimal PEP RNA polymerase catalytic core is composed of four subunits: alpha, beta, beta', and beta''. When a (nuclear-encoded) sigma factor is associated with the core the holoenzyme is formed, which can initiate transcription. Requires Zn(2+) as cofactor.

Its subcellular location is the plastid. It is found in the chloroplast. The catalysed reaction is RNA(n) + a ribonucleoside 5'-triphosphate = RNA(n+1) + diphosphate. In terms of biological role, DNA-dependent RNA polymerase catalyzes the transcription of DNA into RNA using the four ribonucleoside triphosphates as substrates. This is DNA-directed RNA polymerase subunit beta'' from Pelargonium hortorum (Common geranium).